Here is a 705-residue protein sequence, read N- to C-terminus: uncharacterized protein (705 aa).

Residues Ser554 and His676 each act as charge relay system in the active site.

It belongs to the peptidase S9A family.

This is an uncharacterized protein from Sinorhizobium fredii (strain NBRC 101917 / NGR234).